Reading from the N-terminus, the 934-residue chain is Bifunctional uridylyltransferase/uridylyl-removing enzyme (934 aa).

Residues 1–379 form a uridylyltransferase region; it reads MSAHDLKLEE…TFSRRKRKLS (379 aa). The uridylyl-removing stretch occupies residues 380–736; sequence DDGAFISENH…AKPHAFEAVT (357 aa). The region spanning 496–613 is the HD domain; the sequence is VDEHLLRCIA…IDFADTVQTM (118 aa). ACT domains lie at 737 to 818 and 848 to 931; these read EITV…DMLA and VIEV…RSPQ.

This sequence belongs to the GlnD family. Mg(2+) serves as cofactor.

It carries out the reaction [protein-PII]-L-tyrosine + UTP = [protein-PII]-uridylyl-L-tyrosine + diphosphate. The catalysed reaction is [protein-PII]-uridylyl-L-tyrosine + H2O = [protein-PII]-L-tyrosine + UMP + H(+). Its activity is regulated as follows. Uridylyltransferase (UTase) activity is inhibited by glutamine, while glutamine activates uridylyl-removing (UR) activity. Functionally, modifies, by uridylylation and deuridylylation, the PII regulatory proteins (GlnB and homologs), in response to the nitrogen status of the cell that GlnD senses through the glutamine level. Under low glutamine levels, catalyzes the conversion of the PII proteins and UTP to PII-UMP and PPi, while under higher glutamine levels, GlnD hydrolyzes PII-UMP to PII and UMP (deuridylylation). Thus, controls uridylylation state and activity of the PII proteins, and plays an important role in the regulation of nitrogen assimilation and metabolism. This is Bifunctional uridylyltransferase/uridylyl-removing enzyme from Brucella abortus (strain S19).